A 357-amino-acid chain; its full sequence is DNA replication and repair protein RecF (357 aa).

30 to 37 (GANGSGKT) is a binding site for ATP.

The protein belongs to the RecF family.

It localises to the cytoplasm. Functionally, the RecF protein is involved in DNA metabolism; it is required for DNA replication and normal SOS inducibility. RecF binds preferentially to single-stranded, linear DNA. It also seems to bind ATP. This chain is DNA replication and repair protein RecF, found in Salmonella paratyphi B (strain ATCC BAA-1250 / SPB7).